Reading from the N-terminus, the 407-residue chain is Probable endo-beta-1,4-glucanase celB (407 aa).

An N-terminal signal peptide occupies residues 1-18 (MALTLAATALVLLPLVTA). An N-linked (GlcNAc...) asparagine glycan is attached at Asn136. Glu216 functions as the Nucleophile in the catalytic mechanism. The active-site Proton donor is Glu221.

The protein belongs to the glycosyl hydrolase 7 (cellulase C) family.

The protein resides in the secreted. The enzyme catalyses Endohydrolysis of (1-&gt;4)-beta-D-glucosidic linkages in cellulose, lichenin and cereal beta-D-glucans.. Its function is as follows. Has endoglucanase activity on substrates containing beta-1,4 glycosidic bonds, like in carboxymethylcellulose (CMC), hydroxyethylcellulose (HEC) and beta-glucan. Involved in the degradation of complex natural cellulosic substrates. The protein is Probable endo-beta-1,4-glucanase celB (celB) of Neosartorya fischeri (strain ATCC 1020 / DSM 3700 / CBS 544.65 / FGSC A1164 / JCM 1740 / NRRL 181 / WB 181) (Aspergillus fischerianus).